A 540-amino-acid polypeptide reads, in one-letter code: Chaperonin GroEL (540 aa).

ATP is bound by residues 30–33, 87–91, Gly415, and Asp496; these read TLGP and DGTTT.

The protein belongs to the chaperonin (HSP60) family. Forms a cylinder of 14 subunits composed of two heptameric rings stacked back-to-back. Interacts with the co-chaperonin GroES.

Its subcellular location is the cytoplasm. It carries out the reaction ATP + H2O + a folded polypeptide = ADP + phosphate + an unfolded polypeptide.. In terms of biological role, together with its co-chaperonin GroES, plays an essential role in assisting protein folding. The GroEL-GroES system forms a nano-cage that allows encapsulation of the non-native substrate proteins and provides a physical environment optimized to promote and accelerate protein folding. The chain is Chaperonin GroEL from Symbiobacterium thermophilum (strain DSM 24528 / JCM 14929 / IAM 14863 / T).